Here is a 262-residue protein sequence, read N- to C-terminus: Acyl-[acyl-carrier-protein]--UDP-N-acetylglucosamine O-acyltransferase (262 aa).

It belongs to the transferase hexapeptide repeat family. LpxA subfamily. Homotrimer.

It localises to the cytoplasm. The enzyme catalyses a (3R)-hydroxyacyl-[ACP] + UDP-N-acetyl-alpha-D-glucosamine = a UDP-3-O-[(3R)-3-hydroxyacyl]-N-acetyl-alpha-D-glucosamine + holo-[ACP]. The protein operates within glycolipid biosynthesis; lipid IV(A) biosynthesis; lipid IV(A) from (3R)-3-hydroxytetradecanoyl-[acyl-carrier-protein] and UDP-N-acetyl-alpha-D-glucosamine: step 1/6. In terms of biological role, involved in the biosynthesis of lipid A, a phosphorylated glycolipid that anchors the lipopolysaccharide to the outer membrane of the cell. This is Acyl-[acyl-carrier-protein]--UDP-N-acetylglucosamine O-acyltransferase from Blochmanniella floridana.